Consider the following 82-residue polypeptide: Ice-structuring protein A (82 aa).

The signal sequence occupies residues 1–23; that stretch reads MALSLFTVGQLIFLFWTMRITEA. Positions 24 to 44 are cleaved as a propeptide — removed by a dipeptidylpeptidase; that stretch reads SPDPAAKAAPAAAAAPAAAAP. Residue Arg81 is modified to Arginine amide.

It belongs to the type-I AFP family. In terms of tissue distribution, detected in liver and in blood serum (at protein level).

Its subcellular location is the secreted. Contributes to protect fish blood from freezing at subzero sea water temperatures. Lowers the blood freezing point. Binds to nascent ice crystals and prevents further growth. The protein is Ice-structuring protein A of Pseudopleuronectes americanus (Winter flounder).